The chain runs to 1966 residues: Alpha-protein kinase 2 (1966 aa).

6 disordered regions span residues 23 to 65 (NSSP…STGL), 211 to 231 (AMNS…DTDK), 1211 to 1259 (LKSN…AYSD), 1303 to 1365 (SLPN…EGAG), 1386 to 1423 (KTQG…VNGK), and 1437 to 1463 (NKPV…SVRP). Polar residues predominate over residues 211–227 (AMNSEQSPDQPFSIASN). Over residues 1211-1221 (LKSNKKSSSSD) the composition is skewed to low complexity. Residues 1325–1342 (SDGKMRSKHKEKPDDKQQ) show a composition bias toward basic and acidic residues. Over residues 1388–1397 (QGKKKKKHVQ) the composition is skewed to basic residues. A compositionally biased stretch (basic and acidic residues) spans 1401–1417 (PKPENDAPTDVRSESRQ). An Ig-like domain is found at 1577-1659 (PRVVSEIQAD…SLIVANISVS (83 aa)). An intrachain disulfide couples C1599 to C1649. Residues 1702-1934 (KEDFLSDQYF…YCELLGLVSL (233 aa)) form the Alpha-type protein kinase domain. The interval 1937–1966 (KPKRTVAPPKPKTQPVPKKKTFGPVLNAKS) is disordered.

The protein belongs to the protein kinase superfamily. Alpha-type protein kinase family. ALPK subfamily. As to expression, expressed in developing cardiac tissue.

It localises to the basolateral cell membrane. The catalysed reaction is L-seryl-[protein] + ATP = O-phospho-L-seryl-[protein] + ADP + H(+). It catalyses the reaction L-threonyl-[protein] + ATP = O-phospho-L-threonyl-[protein] + ADP + H(+). In terms of biological role, protein kinase that recognizes phosphorylation sites in which the surrounding peptides have an alpha-helical conformation. Regulates cardiac development and cardiomyocyte differentiation by negatively regulating Wnt/beta-catenin signaling. The chain is Alpha-protein kinase 2 (alpk2) from Danio rerio (Zebrafish).